The primary structure comprises 221 residues: Uracil-DNA glycosylase (221 aa).

Residue aspartate 65 is the Proton acceptor of the active site.

This sequence belongs to the uracil-DNA glycosylase (UDG) superfamily. UNG family.

It localises to the cytoplasm. It catalyses the reaction Hydrolyzes single-stranded DNA or mismatched double-stranded DNA and polynucleotides, releasing free uracil.. In terms of biological role, excises uracil residues from the DNA which can arise as a result of misincorporation of dUMP residues by DNA polymerase or due to deamination of cytosine. This chain is Uracil-DNA glycosylase, found in Flavobacterium johnsoniae (strain ATCC 17061 / DSM 2064 / JCM 8514 / BCRC 14874 / CCUG 350202 / NBRC 14942 / NCIMB 11054 / UW101) (Cytophaga johnsonae).